The chain runs to 363 residues: DNA replication and repair protein RecF (363 aa).

30–37 provides a ligand contact to ATP; the sequence is GPNGSGKT.

It belongs to the RecF family.

Its subcellular location is the cytoplasm. In terms of biological role, the RecF protein is involved in DNA metabolism; it is required for DNA replication and normal SOS inducibility. RecF binds preferentially to single-stranded, linear DNA. It also seems to bind ATP. The protein is DNA replication and repair protein RecF of Chlorobium phaeobacteroides (strain BS1).